We begin with the raw amino-acid sequence, 205 residues long: Helix-loop-helix protein 4 (205 aa).

Residues 3 to 16 (MVVAKRNARERTRV) form a basic motif region. The bHLH domain maps to 3–56 (MVVAKRNARERTRVHTVNQAFLVLKQHLPSLRQFTKRVSKLRILNAAITYIDTL). Positions 17 to 56 (HTVNQAFLVLKQHLPSLRQFTKRVSKLRILNAAITYIDTL) are helix-loop-helix motif.

Expressed in the ADL sensory neurons.

It is found in the nucleus. Acts as a transcriptional regulator. May mediate transcriptional activation by binding to the E-box motif 5'-CANNTG-3'. Required for the correct morphology, terminal identity and function of the ADL sensory neurons by controlling the expression of the ADL-specific gene repertoire, including chemoreceptor encoding genes, ion channel encoding genes, neuropeptides and the neurotransmitter eat-4. Regulates the expression of the srh-234 chemoreceptor encoding gene in the ADL neurons under feeding conditions. Plays a role in the chemorepulsive response toward ascaroside pheromones mediated by the ADL sensory neurons. In Caenorhabditis elegans, this protein is Helix-loop-helix protein 4 (hlh-4).